Here is a 372-residue protein sequence, read N- to C-terminus: 18-hydroxynorfluorocurarine reductase (372 aa).

Zn(2+)-binding residues include Cys47, Asp50, His69, Glu70, Cys100, Cys103, Cys106, Cys114, and Cys172. Residues 197 to 202 (GLGGIG), Lys226, 283 to 285 (LGA), Ser307, and Arg354 contribute to the NADP(+) site.

It belongs to the zinc-containing alcohol dehydrogenase family. As to quaternary structure, homodimer. Zn(2+) serves as cofactor. As to expression, mainly expressed in roots.

The catalysed reaction is (19E)-cur-19-en-17-al + NADP(+) = norfluorocurarine + NADPH + H(+). The enzyme catalyses 17,18-epoxy-17-hydroxycur-19-ene + NADP(+) = 18-hydroxynorfluorocurarine + NADPH + H(+). The protein operates within alkaloid biosynthesis. Alcohol dehydrogenase involved in the biosynthesis of curare monoterpene indole alkaloids (MIAs), natural products such as strychnine, a neurotoxic compound used as a pesticide to control rodents, and its pharmacologically active derivatives, including brucine, used to regulate blood pressure. Curare alkaloids act as animal glycine receptor antagonists. Catalyzes the conversion of norfluorocurarine to desoxy Wieland-Gumlich aldehyde, and of 18-OH norfluorocurarine to Wieland-Gumlich aldehyde. This chain is 18-hydroxynorfluorocurarine reductase, found in Strychnos nux-vomica (Poison nut).